Here is a 125-residue protein sequence, read N- to C-terminus: Neuropeptide B (125 aa).

The N-terminal stretch at 1–24 (MARSATLAAAALALCLLLAPPGLA) is a signal peptide. The segment at 54 to 73 (RRSQPYRGAEPPGGAGASPE) is disordered. Positions 56-125 (SQPYRGAEPP…SLRAADCLAA (70 aa)) are excised as a propeptide.

This sequence belongs to the neuropeptide B/W family. Widely expressed in the central nervous system. High levels are found in substantia nigra, hypothalamus, hippocampus, spinal cord, placenta and fetal brain; lower levels are found in testis, uterus and ovary. Also detected at high levels in colorectal adenocarcinoma.

It is found in the secreted. May be involved in the regulation of feeding, neuroendocrine system, memory, learning and in the afferent pain pathway. In Homo sapiens (Human), this protein is Neuropeptide B (NPB).